The primary structure comprises 106 residues: UPF0145 protein CPE0882 (106 aa).

The protein belongs to the UPF0145 family.

The polypeptide is UPF0145 protein CPE0882 (Clostridium perfringens (strain 13 / Type A)).